The following is a 526-amino-acid chain: Phosphoenolpyruvate carboxylase (526 aa).

The protein belongs to the PEPCase type 2 family. In terms of assembly, homotetramer. Requires Mg(2+) as cofactor.

It carries out the reaction oxaloacetate + phosphate = phosphoenolpyruvate + hydrogencarbonate. Its function is as follows. Catalyzes the irreversible beta-carboxylation of phosphoenolpyruvate (PEP) to form oxaloacetate (OAA), a four-carbon dicarboxylic acid source for the tricarboxylic acid cycle. The polypeptide is Phosphoenolpyruvate carboxylase (Methanosarcina barkeri (strain Fusaro / DSM 804)).